Reading from the N-terminus, the 673-residue chain is Annexin A6 (673 aa).

A2 is modified (N-acetylalanine). S13 bears the Phosphoserine mark. 8 Annexin repeats span residues 20 to 91 (FDAN…NLMR), 92 to 163 (PLAY…VLLQ), 175 to 247 (DLVQ…AVVK), 251 to 322 (STPE…KLCG), 363 to 434 (FNPD…GLMM), 435 to 506 (PPAH…SLAT), 521 to 595 (EDAQ…AIVQ), and 599 to 670 (NKPL…ALCG). Position 30 is a phosphotyrosine (Y30). N6-acetyllysine occurs at positions 63, 68, 75, and 81. Position 201 is a phosphotyrosine (Y201). K306, K370, and K418 each carry N6-acetyllysine. S422 is modified (phosphoserine). K483 carries the N6-acetyllysine modification. S537 is subject to Phosphoserine. At K620 the chain carries N6-acetyllysine.

This sequence belongs to the annexin family.

It localises to the cytoplasm. It is found in the melanosome. Functionally, may associate with CD21. May regulate the release of Ca(2+) from intracellular stores. The polypeptide is Annexin A6 (Anxa6) (Mus musculus (Mouse)).